Here is a 346-residue protein sequence, read N- to C-terminus: uncharacterized protein (346 aa).

The tract at residues 322 to 346 (GRDGGYRETTSPPTGRGRNVRGSHA) is disordered.

This is an uncharacterized protein from Mycobacterium tuberculosis (strain CDC 1551 / Oshkosh).